Reading from the N-terminus, the 50-residue chain is Large ribosomal subunit protein bL33 (50 aa).

It belongs to the bacterial ribosomal protein bL33 family.

The polypeptide is Large ribosomal subunit protein bL33 (Sulfurimonas denitrificans (strain ATCC 33889 / DSM 1251) (Thiomicrospira denitrificans (strain ATCC 33889 / DSM 1251))).